Reading from the N-terminus, the 484-residue chain is Protein nucleotidyltransferase YdiU (484 aa).

The ATP site is built by glycine 81, glycine 83, arginine 84, lysine 103, aspartate 115, glycine 116, arginine 166, and arginine 173. Catalysis depends on aspartate 244, which acts as the Proton acceptor. 2 residues coordinate Mg(2+): asparagine 245 and aspartate 254. Residue aspartate 254 participates in ATP binding.

This sequence belongs to the SELO family. The cofactor is Mg(2+). Mn(2+) is required as a cofactor.

The enzyme catalyses L-seryl-[protein] + ATP = 3-O-(5'-adenylyl)-L-seryl-[protein] + diphosphate. The catalysed reaction is L-threonyl-[protein] + ATP = 3-O-(5'-adenylyl)-L-threonyl-[protein] + diphosphate. It catalyses the reaction L-tyrosyl-[protein] + ATP = O-(5'-adenylyl)-L-tyrosyl-[protein] + diphosphate. It carries out the reaction L-histidyl-[protein] + UTP = N(tele)-(5'-uridylyl)-L-histidyl-[protein] + diphosphate. The enzyme catalyses L-seryl-[protein] + UTP = O-(5'-uridylyl)-L-seryl-[protein] + diphosphate. The catalysed reaction is L-tyrosyl-[protein] + UTP = O-(5'-uridylyl)-L-tyrosyl-[protein] + diphosphate. Nucleotidyltransferase involved in the post-translational modification of proteins. It can catalyze the addition of adenosine monophosphate (AMP) or uridine monophosphate (UMP) to a protein, resulting in modifications known as AMPylation and UMPylation. This chain is Protein nucleotidyltransferase YdiU, found in Shewanella sp. (strain MR-7).